Here is a 396-residue protein sequence, read N- to C-terminus: Phosphoglycerate kinase (396 aa).

Substrate-binding positions include D21–N23, R36, H59–R62, R118, and R151. ATP contacts are provided by residues K201, E323, and G353 to T356.

It belongs to the phosphoglycerate kinase family. In terms of assembly, monomer.

The protein resides in the cytoplasm. It carries out the reaction (2R)-3-phosphoglycerate + ATP = (2R)-3-phospho-glyceroyl phosphate + ADP. The protein operates within carbohydrate degradation; glycolysis; pyruvate from D-glyceraldehyde 3-phosphate: step 2/5. This Ruegeria sp. (strain TM1040) (Silicibacter sp.) protein is Phosphoglycerate kinase.